A 232-amino-acid chain; its full sequence is 2,3-bisphosphoglycerate-dependent phosphoglycerate mutase (232 aa).

Residues 10–17 (RHGESQWN), 23–24 (TG), Arg-62, 89–92 (ERHY), Lys-100, 116–117 (RR), and 186–187 (GN) contribute to the substrate site. Catalysis depends on His-11, which acts as the Tele-phosphohistidine intermediate. The active-site Proton donor/acceptor is the Glu-89.

It belongs to the phosphoglycerate mutase family. BPG-dependent PGAM subfamily. As to quaternary structure, homodimer.

The catalysed reaction is (2R)-2-phosphoglycerate = (2R)-3-phosphoglycerate. The protein operates within carbohydrate degradation; glycolysis; pyruvate from D-glyceraldehyde 3-phosphate: step 3/5. Its function is as follows. Catalyzes the interconversion of 2-phosphoglycerate and 3-phosphoglycerate. This is 2,3-bisphosphoglycerate-dependent phosphoglycerate mutase from Blochmanniella pennsylvanica (strain BPEN).